The chain runs to 434 residues: Putative G3BP-like protein (434 aa).

In terms of domain architecture, NTF2 spans 18–134 (IGWMFVQEYY…YFVLNDIFRF (117 aa)). 2 disordered regions span residues 141 to 180 (EEEE…EGHY) and 274 to 308 (VKSQ…PYTQ). The residue at position 145 (Ser145) is a Phosphoserine. The segment covering 148–157 (AVEKEKKDVA) has biased composition (basic and acidic residues). Low complexity predominate over residues 276 to 291 (SQASVSSTASTTGQTV). Residues 296–308 (ADQTQQPTAPYTQ) are compositionally biased toward polar residues. The region spanning 315-386 (TSVFVKNIPP…ATLNIEERRR (72 aa)) is the RRM domain. The segment at 390–434 (GKFNKSGDKKSNDNYNGMKRNFRKGNRGAFDGRSKEVTTSKKQNN) is disordered. The segment covering 419–428 (FDGRSKEVTT) has biased composition (basic and acidic residues).

Functionally, probable scaffold protein that may be involved in mRNA transport. In Schizosaccharomyces pombe (strain 972 / ATCC 24843) (Fission yeast), this protein is Putative G3BP-like protein (nxt3).